A 473-amino-acid polypeptide reads, in one-letter code: Ribulose bisphosphate carboxylase large chain (473 aa).

Asn116 and Thr166 together coordinate substrate. The active-site Proton acceptor is the Lys168. Lys170 provides a ligand contact to substrate. Mg(2+)-binding residues include Lys194, Asp196, and Glu197. Lys194 carries the N6-carboxylysine modification. His287 acts as the Proton acceptor in catalysis. Substrate contacts are provided by Arg288, His320, and Ser372.

It belongs to the RuBisCO large chain family. Type I subfamily. Heterohexadecamer of 8 large chains and 8 small chains. It depends on Mg(2+) as a cofactor.

The catalysed reaction is 2 (2R)-3-phosphoglycerate + 2 H(+) = D-ribulose 1,5-bisphosphate + CO2 + H2O. The enzyme catalyses D-ribulose 1,5-bisphosphate + O2 = 2-phosphoglycolate + (2R)-3-phosphoglycerate + 2 H(+). Functionally, ruBisCO catalyzes two reactions: the carboxylation of D-ribulose 1,5-bisphosphate, the primary event in carbon dioxide fixation, as well as the oxidative fragmentation of the pentose substrate. Both reactions occur simultaneously and in competition at the same active site. This is Ribulose bisphosphate carboxylase large chain from Nitrosomonas sp. (strain ENI-11).